Consider the following 124-residue polypeptide: Small ribosomal subunit protein bS6 (124 aa).

Residues 93-124 (KKAETGPSSMMKTVEREEARKAQQAEYAANNS) form a disordered region. Positions 105–115 (TVEREEARKAQ) are enriched in basic and acidic residues.

This sequence belongs to the bacterial ribosomal protein bS6 family.

Its function is as follows. Binds together with bS18 to 16S ribosomal RNA. The polypeptide is Small ribosomal subunit protein bS6 (Variovorax paradoxus (strain S110)).